We begin with the raw amino-acid sequence, 419 residues long: Serine hydroxymethyltransferase (419 aa).

(6S)-5,6,7,8-tetrahydrofolate-binding positions include Leu121 and 125 to 127; that span reads GHL. Lys229 carries the N6-(pyridoxal phosphate)lysine modification.

It belongs to the SHMT family. As to quaternary structure, homodimer. Pyridoxal 5'-phosphate serves as cofactor.

The protein localises to the cytoplasm. It catalyses the reaction (6R)-5,10-methylene-5,6,7,8-tetrahydrofolate + glycine + H2O = (6S)-5,6,7,8-tetrahydrofolate + L-serine. Its pathway is one-carbon metabolism; tetrahydrofolate interconversion. It participates in amino-acid biosynthesis; glycine biosynthesis; glycine from L-serine: step 1/1. In terms of biological role, catalyzes the reversible interconversion of serine and glycine with tetrahydrofolate (THF) serving as the one-carbon carrier. This reaction serves as the major source of one-carbon groups required for the biosynthesis of purines, thymidylate, methionine, and other important biomolecules. Also exhibits THF-independent aldolase activity toward beta-hydroxyamino acids, producing glycine and aldehydes, via a retro-aldol mechanism. The sequence is that of Serine hydroxymethyltransferase from Histophilus somni (strain 2336) (Haemophilus somnus).